Consider the following 618-residue polypeptide: Very-long-chain aldehyde decarbonylase GL1-3 (618 aa).

7 consecutive transmembrane segments (helical) span residues 9 to 29 (LSSW…GPVV), 46 to 66 (TSWC…MLFF), 91 to 111 (MVIM…FPAT), 121 to 141 (GWAI…YWAH), 174 to 194 (LESL…FMAG), 289 to 309 (DFVF…PFAF), and 315 to 335 (LPFA…GFML). One can recognise a Fatty acid hydroxylase domain in the interval 127-267 (VLHVAVSEPA…MPLFDALGGT (141 aa)).

The protein belongs to the sterol desaturase family. As to quaternary structure, homodimer. Expressed in germinating seeds and stamens.

Its subcellular location is the endoplasmic reticulum membrane. It carries out the reaction a long-chain fatty aldehyde + 2 NADPH + O2 + H(+) = a long-chain alkane + formate + 2 NADP(+) + H2O. Aldehyde decarbonylase involved in the conversion of aldehydes to alkanes. Core component of a very-long-chain alkane synthesis complex. This chain is Very-long-chain aldehyde decarbonylase GL1-3, found in Oryza sativa subsp. japonica (Rice).